We begin with the raw amino-acid sequence, 354 residues long: Anthranilate phosphoribosyltransferase (354 aa).

5-phospho-alpha-D-ribose 1-diphosphate-binding positions include G94, 97–98 (GD), T102, 104–107 (NIST), 122–130 (KHGNRAASS), and S134. Position 94 (G94) interacts with anthranilate. Position 106 (S106) interacts with Mg(2+). An anthranilate-binding site is contributed by N125. Anthranilate is bound at residue R180. 2 residues coordinate Mg(2+): D238 and E239.

This sequence belongs to the anthranilate phosphoribosyltransferase family. In terms of assembly, homodimer. Requires Mg(2+) as cofactor.

It carries out the reaction N-(5-phospho-beta-D-ribosyl)anthranilate + diphosphate = 5-phospho-alpha-D-ribose 1-diphosphate + anthranilate. The protein operates within amino-acid biosynthesis; L-tryptophan biosynthesis; L-tryptophan from chorismate: step 2/5. Functionally, catalyzes the transfer of the phosphoribosyl group of 5-phosphorylribose-1-pyrophosphate (PRPP) to anthranilate to yield N-(5'-phosphoribosyl)-anthranilate (PRA). This chain is Anthranilate phosphoribosyltransferase, found in Streptomyces griseus subsp. griseus (strain JCM 4626 / CBS 651.72 / NBRC 13350 / KCC S-0626 / ISP 5235).